We begin with the raw amino-acid sequence, 147 residues long: Hemoglobin subunit beta (147 aa).

N-acetylvaline is present on Val-2. The Globin domain maps to 3 to 147 (HLTGEEKSAV…VANALAHKYH (145 aa)). Thr-13 carries the post-translational modification Phosphothreonine. Residue Ser-45 is modified to Phosphoserine. The residue at position 60 (Lys-60) is an N6-acetyllysine. His-64 is a heme b binding site. Lys-83 is modified (N6-acetyllysine). Residue His-93 coordinates heme b. Position 94 is an S-nitrosocysteine (Cys-94). Lys-145 carries the post-translational modification N6-acetyllysine.

It belongs to the globin family. Heterotetramer of two alpha chains and two beta chains. As to expression, red blood cells.

Involved in oxygen transport from the lung to the various peripheral tissues. This chain is Hemoglobin subunit beta (HBB), found in Ateles paniscus (Black spider monkey).